Consider the following 264-residue polypeptide: Proteasome subunit beta type-4 (264 aa).

Met-1 is modified (N-acetylmethionine). A propeptide spanning residues 1–45 (MEAFWESRAGHWAGGPAPGQFYRIPATPSGLMDPASAPCEGPITR) is cleaved from the precursor. Tyr-102 carries the post-translational modification Phosphotyrosine.

It belongs to the peptidase T1B family. The 26S proteasome consists of a 20S proteasome core and two 19S regulatory subunits. The 20S proteasome core is a barrel-shaped complex made of 28 subunits that are arranged in four stacked rings. The two outer rings are each formed by seven alpha subunits, and the two inner rings are formed by seven beta subunits. The proteolytic activity is exerted by three beta-subunits PSMB5, PSMB6 and PSMB7. Forms a ternary complex with SMAD1 and OAZ1 before PSMB4 is incorporated into the 20S proteasome. Interacts with PRPF19. In terms of tissue distribution, detected in liver (at protein level).

It is found in the cytoplasm. The protein localises to the nucleus. Its function is as follows. Non-catalytic component of the 20S core proteasome complex involved in the proteolytic degradation of most intracellular proteins. This complex plays numerous essential roles within the cell by associating with different regulatory particles. Associated with two 19S regulatory particles, forms the 26S proteasome and thus participates in the ATP-dependent degradation of ubiquitinated proteins. The 26S proteasome plays a key role in the maintenance of protein homeostasis by removing misfolded or damaged proteins that could impair cellular functions, and by removing proteins whose functions are no longer required. Associated with the PA200 or PA28, the 20S proteasome mediates ubiquitin-independent protein degradation. This type of proteolysis is required in several pathways including spermatogenesis (20S-PA200 complex) or generation of a subset of MHC class I-presented antigenic peptides (20S-PA28 complex). SMAD1/OAZ1/PSMB4 complex mediates the degradation of the CREBBP/EP300 repressor SNIP1. This is Proteasome subunit beta type-4 (Psmb4) from Mus musculus (Mouse).